The sequence spans 492 residues: N-succinylglutamate 5-semialdehyde dehydrogenase (492 aa).

220-225 (GSASTG) contributes to the NAD(+) binding site. Residues Glu243 and Cys277 contribute to the active site.

Belongs to the aldehyde dehydrogenase family. AstD subfamily.

The enzyme catalyses N-succinyl-L-glutamate 5-semialdehyde + NAD(+) + H2O = N-succinyl-L-glutamate + NADH + 2 H(+). The protein operates within amino-acid degradation; L-arginine degradation via AST pathway; L-glutamate and succinate from L-arginine: step 4/5. Functionally, catalyzes the NAD-dependent reduction of succinylglutamate semialdehyde into succinylglutamate. This chain is N-succinylglutamate 5-semialdehyde dehydrogenase, found in Salmonella typhi.